A 460-amino-acid chain; its full sequence is Hemopexin (460 aa).

A signal peptide spans 1–23 (MARTVVALNILVLLGLCWSLAVA). Residues asparagine 38 and asparagine 64 are each glycosylated (N-linked (GlcNAc...) asparagine). Disulfide bonds link cysteine 50–cysteine 230, cysteine 148–cysteine 153, and cysteine 187–cysteine 199. 4 Hemopexin repeats span residues 53-93 (AWSF…WKNP), 94-138 (VTSV…FPGI), 139-183 (PYPP…SWPA), and 184-230 (VGNC…FISC). A heme-binding site is contributed by histidine 79. Histidine 149 provides a ligand contact to heme. N-linked (GlcNAc...) asparagine glycosylation is present at asparagine 186. Residue histidine 235 coordinates heme. 2 N-linked (GlcNAc...) asparagine glycosylation sites follow: asparagine 240 and asparagine 246. 3 cysteine pairs are disulfide-bonded: cysteine 255/cysteine 458, cysteine 364/cysteine 406, and cysteine 416/cysteine 433. Hemopexin repeat units lie at residues 257–302 (ADPG…WPQG), 303–350 (PSAV…LGSP), 355–394 (LDTI…WAEL), and 398–448 (HEKV…SLPQ). Heme is bound at residue histidine 291.

Belongs to the hemopexin family. In terms of tissue distribution, expressed by the liver and secreted in plasma.

The protein localises to the secreted. Binds heme and transports it to the liver for breakdown and iron recovery, after which the free hemopexin returns to the circulation. This is Hemopexin (Hpx) from Rattus norvegicus (Rat).